Reading from the N-terminus, the 499-residue chain is Cysteine--tRNA ligase (499 aa).

Residue Cys29 participates in Zn(2+) binding. The short motif at 31–41 (VTVYDLCHLGH) is the 'HIGH' region element. Residues Cys213, His238, and Glu242 each contribute to the Zn(2+) site. Positions 270–274 (KMSKS) match the 'KMSKS' region motif. An ATP-binding site is contributed by Lys273.

The protein belongs to the class-I aminoacyl-tRNA synthetase family. As to quaternary structure, monomer. Zn(2+) serves as cofactor.

Its subcellular location is the cytoplasm. It carries out the reaction tRNA(Cys) + L-cysteine + ATP = L-cysteinyl-tRNA(Cys) + AMP + diphosphate. The sequence is that of Cysteine--tRNA ligase from Synechococcus sp. (strain CC9902).